The following is a 146-amino-acid chain: Hemoglobin subunit beta (146 aa).

The residue at position 1 (Val-1) is an N-acetylvaline. The Globin domain maps to His-2–His-146. Phosphothreonine is present on Thr-12. Ser-44 is subject to Phosphoserine. Residue Lys-59 is modified to N6-acetyllysine. His-63 provides a ligand contact to heme b. At Lys-82 the chain carries N6-acetyllysine. Residue His-92 participates in heme b binding. Position 93 is an S-nitrosocysteine (Cys-93). Residue Lys-144 is modified to N6-acetyllysine.

The protein belongs to the globin family. Heterotetramer of two alpha chains and two beta chains. In terms of tissue distribution, red blood cells.

Involved in oxygen transport from the lung to the various peripheral tissues. This Peromyscus californicus (California mouse) protein is Hemoglobin subunit beta.